The chain runs to 123 residues: Large ribosomal subunit protein bL12 (123 aa).

This sequence belongs to the bacterial ribosomal protein bL12 family. As to quaternary structure, homodimer. Part of the ribosomal stalk of the 50S ribosomal subunit. Forms a multimeric L10(L12)X complex, where L10 forms an elongated spine to which 2 to 4 L12 dimers bind in a sequential fashion. Binds GTP-bound translation factors.

Forms part of the ribosomal stalk which helps the ribosome interact with GTP-bound translation factors. Is thus essential for accurate translation. The sequence is that of Large ribosomal subunit protein bL12 from Borrelia duttonii (strain Ly).